We begin with the raw amino-acid sequence, 246 residues long: Probable ABC transporter permease protein BMEII0107 (246 aa).

6 helical membrane passes run 12 to 32 (LLSF…GAVV), 63 to 83 (VLSG…LMGW), 94 to 114 (WVQF…IVTL), 122 to 142 (IFVI…QGVI), 172 to 192 (VPFI…TVVA), and 211 to 231 (LYYD…LGLF). The region spanning 56–236 (IFASLRRVLS…ILGLFMDRLL (181 aa)) is the ABC transmembrane type-1 domain.

This sequence belongs to the binding-protein-dependent transport system permease family. In terms of assembly, the complex is composed of two ATP-binding proteins (BMEII0108), two transmembrane proteins (BMEII0107) and a solute-binding protein (BMEII0109).

The protein resides in the cell inner membrane. Functionally, probably part of an ABC transporter complex. Probably responsible for the translocation of the substrate across the membrane. The chain is Probable ABC transporter permease protein BMEII0107 from Brucella melitensis biotype 1 (strain ATCC 23456 / CCUG 17765 / NCTC 10094 / 16M).